Reading from the N-terminus, the 531-residue chain is UPF0159 protein CPn_0746/CP_1126/CPj0746/CpB0774 (531 aa).

ThyX domains lie at 38–274 and 309–511; these read KGAL…AEPH and PSVQ…FKFV.

Belongs to the UPF0159 family.

The chain is UPF0159 protein CPn_0746/CP_1126/CPj0746/CpB0774 from Chlamydia pneumoniae (Chlamydophila pneumoniae).